The sequence spans 56 residues: Large ribosomal subunit protein bL32 (56 aa).

This sequence belongs to the bacterial ribosomal protein bL32 family.

This chain is Large ribosomal subunit protein bL32, found in Prochlorococcus marinus (strain MIT 9215).